The primary structure comprises 283 residues: MNAWNTIYERFNPIAFSLGSIEVHWYGLAYACAIVIAFYMALRMIQKDPKRFPVARKDFESYFLWAELGIVLGARIGYILIYEPNSSYYLTHFWQIFNPFDSHGNFIGIRGMSYHGGLVGFLIASYLYNRKDLKKLLIYLDLIAISLPLGYVFGRIGNFLNQELVGRIVPKDSHLGQMIGIVVDHELRYPSQLIEAFLEGVIVFLMVMWAKKHTKTHGLLIVVYGLGYSLMRFIAEFYREPDSQLGVYFLNLSMGQILSLFMVIVSLGILLYATKNSKKIKEN.

7 consecutive transmembrane segments (helical) span residues 21-41, 62-82, 106-126, 136-156, 190-210, 218-238, and 252-272; these read IEVHWYGLAYACAIVIAFYMA, YFLWAELGIVLGARIGYILIY, FIGIRGMSYHGGLVGFLIASY, LLIYLDLIAISLPLGYVFGRI, PSQLIEAFLEGVIVFLMVMWA, GLLIVVYGLGYSLMRFIAEFY, and LSMGQILSLFMVIVSLGILLY. R155 provides a ligand contact to a 1,2-diacyl-sn-glycero-3-phospho-(1'-sn-glycerol).

Belongs to the Lgt family.

It localises to the cell inner membrane. It catalyses the reaction L-cysteinyl-[prolipoprotein] + a 1,2-diacyl-sn-glycero-3-phospho-(1'-sn-glycerol) = an S-1,2-diacyl-sn-glyceryl-L-cysteinyl-[prolipoprotein] + sn-glycerol 1-phosphate + H(+). The protein operates within protein modification; lipoprotein biosynthesis (diacylglyceryl transfer). Catalyzes the transfer of the diacylglyceryl group from phosphatidylglycerol to the sulfhydryl group of the N-terminal cysteine of a prolipoprotein, the first step in the formation of mature lipoproteins. The sequence is that of Phosphatidylglycerol--prolipoprotein diacylglyceryl transferase from Helicobacter acinonychis (strain Sheeba).